The primary structure comprises 94 residues: Small ribosomal subunit protein uS17 (94 aa).

The interval 1-22 is disordered; sequence MASSSTEGQAAARGRKKSWTGK.

It belongs to the universal ribosomal protein uS17 family. In terms of assembly, part of the 30S ribosomal subunit.

One of the primary rRNA binding proteins, it binds specifically to the 5'-end of 16S ribosomal RNA. In Chlorobium luteolum (strain DSM 273 / BCRC 81028 / 2530) (Pelodictyon luteolum), this protein is Small ribosomal subunit protein uS17.